The primary structure comprises 254 residues: Large ribosomal subunit protein uL2B (254 aa).

K46 participates in a covalent cross-link: Glycyl lysine isopeptide (Lys-Gly) (interchain with G-Cter in ubiquitin). Phosphoserine is present on S52. Residue K93 forms a Glycyl lysine isopeptide (Lys-Gly) (interchain with G-Cter in ubiquitin) linkage. S95 is modified (phosphoserine). Glycyl lysine isopeptide (Lys-Gly) (interchain with G-Cter in ubiquitin) cross-links involve residues K119 and K145. Residues S159, S160, and S249 each carry the phosphoserine modification.

The protein belongs to the universal ribosomal protein uL2 family. In terms of assembly, component of the large ribosomal subunit (LSU). Mature yeast ribosomes consist of a small (40S) and a large (60S) subunit. The 40S small subunit contains 1 molecule of ribosomal RNA (18S rRNA) and 33 different proteins (encoded by 57 genes). The large 60S subunit contains 3 rRNA molecules (25S, 5.8S and 5S rRNA) and 46 different proteins (encoded by 81 genes).

It is found in the cytoplasm. Functionally, component of the ribosome, a large ribonucleoprotein complex responsible for the synthesis of proteins in the cell. The small ribosomal subunit (SSU) binds messenger RNAs (mRNAs) and translates the encoded message by selecting cognate aminoacyl-transfer RNA (tRNA) molecules. The large subunit (LSU) contains the ribosomal catalytic site termed the peptidyl transferase center (PTC), which catalyzes the formation of peptide bonds, thereby polymerizing the amino acids delivered by tRNAs into a polypeptide chain. The nascent polypeptides leave the ribosome through a tunnel in the LSU and interact with protein factors that function in enzymatic processing, targeting, and the membrane insertion of nascent chains at the exit of the ribosomal tunnel. The sequence is that of Large ribosomal subunit protein uL2B from Saccharomyces cerevisiae (strain ATCC 204508 / S288c) (Baker's yeast).